The sequence spans 109 residues: Fluoride-specific ion channel FluC 1 (109 aa).

4 consecutive transmembrane segments (helical) span residues Met1 to Ser21, Leu29 to Asn49, Glu55 to Asn75, and Val87 to Ile107. Gly66 and Thr69 together coordinate Na(+).

The protein belongs to the fluoride channel Fluc/FEX (TC 1.A.43) family.

Its subcellular location is the cell membrane. It catalyses the reaction fluoride(in) = fluoride(out). With respect to regulation, na(+) is not transported, but it plays an essential structural role and its presence is essential for fluoride channel function. Its function is as follows. Fluoride-specific ion channel. Important for reducing fluoride concentration in the cell, thus reducing its toxicity. The sequence is that of Fluoride-specific ion channel FluC 1 from Streptococcus pneumoniae serotype 4 (strain ATCC BAA-334 / TIGR4).